The following is a 430-amino-acid chain: Protein translocase subunit SecY (430 aa).

The next 10 helical transmembrane spans lie at 18-38 (VIFT…PVPG), 67-87 (FSIF…MQLL), 118-138 (IVLG…FFPG), 145-165 (VSVY…LMWL), 177-197 (GISI…LNLI), 213-233 (IVVI…VIFV), 270-290 (VIPV…AGLF), 309-329 (PIGM…YTFI), 369-389 (FVGS…IKFA), and 390-410 (DLPQ…GVAL).

Belongs to the SecY/SEC61-alpha family. In terms of assembly, component of the Sec protein translocase complex. Heterotrimer consisting of SecY, SecE and SecG subunits. The heterotrimers can form oligomers, although 1 heterotrimer is thought to be able to translocate proteins. Interacts with the ribosome. Interacts with SecDF, and other proteins may be involved. Interacts with SecA.

It is found in the cell membrane. The central subunit of the protein translocation channel SecYEG. Consists of two halves formed by TMs 1-5 and 6-10. These two domains form a lateral gate at the front which open onto the bilayer between TMs 2 and 7, and are clamped together by SecE at the back. The channel is closed by both a pore ring composed of hydrophobic SecY resides and a short helix (helix 2A) on the extracellular side of the membrane which forms a plug. The plug probably moves laterally to allow the channel to open. The ring and the pore may move independently. This chain is Protein translocase subunit SecY, found in Halalkalibacterium halodurans (strain ATCC BAA-125 / DSM 18197 / FERM 7344 / JCM 9153 / C-125) (Bacillus halodurans).